Reading from the N-terminus, the 403-residue chain is Eukaryotic translation initiation factor 3 subunit H (403 aa).

The region spanning 57–206 is the MPN domain; sequence VRLDGLALTK…VKAYRLSPSF (150 aa). The disordered stretch occupies residues 99-122; sequence ALPNPGRSNSERDEEEDRSSRNAT.

The protein belongs to the eIF-3 subunit H family. Component of the eukaryotic translation initiation factor 3 (eIF-3) complex.

Its subcellular location is the cytoplasm. Its function is as follows. Component of the eukaryotic translation initiation factor 3 (eIF-3) complex, which is involved in protein synthesis of a specialized repertoire of mRNAs and, together with other initiation factors, stimulates binding of mRNA and methionyl-tRNAi to the 40S ribosome. The eIF-3 complex specifically targets and initiates translation of a subset of mRNAs involved in cell proliferation. The polypeptide is Eukaryotic translation initiation factor 3 subunit H (Mycosarcoma maydis (Corn smut fungus)).